The following is a 132-amino-acid chain: Small ribosomal subunit protein uS8c (132 aa).

Belongs to the universal ribosomal protein uS8 family. In terms of assembly, part of the 30S ribosomal subunit.

It is found in the plastid. The protein localises to the chloroplast. In terms of biological role, one of the primary rRNA binding proteins, it binds directly to 16S rRNA central domain where it helps coordinate assembly of the platform of the 30S subunit. This is Small ribosomal subunit protein uS8c (rps8) from Spirogyra maxima (Green alga).